Here is a 255-residue protein sequence, read N- to C-terminus: Aliphatic sulfonates import ATP-binding protein SsuB (255 aa).

One can recognise an ABC transporter domain in the interval 12 to 233 (LLLNAVSKHY…RLGSVRLAEL (222 aa)). Residue 44-51 (GRSGGGKS) coordinates ATP.

Belongs to the ABC transporter superfamily. Aliphatic sulfonates importer (TC 3.A.1.17.2) family. The complex is composed of two ATP-binding proteins (SsuB), two transmembrane proteins (SsuC) and a solute-binding protein (SsuA).

It localises to the cell inner membrane. It carries out the reaction ATP + H2O + aliphatic sulfonate-[sulfonate-binding protein]Side 1 = ADP + phosphate + aliphatic sulfonateSide 2 + [sulfonate-binding protein]Side 1.. Functionally, part of the ABC transporter complex SsuABC involved in aliphatic sulfonates import. Responsible for energy coupling to the transport system. The chain is Aliphatic sulfonates import ATP-binding protein SsuB from Escherichia coli O1:K1 / APEC.